The sequence spans 443 residues: Cobyrinate a,c-diamide synthase (443 aa).

Residues 248 to 433 enclose the GATase cobBQ-type domain; it reads KIAVAYDKAF…LHNHAVANPY (186 aa). The active-site Nucleophile is the Cys327.

The protein belongs to the CobB/CbiA family. Requires Mg(2+) as cofactor.

It carries out the reaction cob(II)yrinate + 2 L-glutamine + 2 ATP + 2 H2O = cob(II)yrinate a,c diamide + 2 L-glutamate + 2 ADP + 2 phosphate + 2 H(+). The enzyme catalyses Ni-sirohydrochlorin + 2 L-glutamine + 2 ATP + 2 H2O = Ni-sirohydrochlorin a,c-diamide + 2 L-glutamate + 2 ADP + 2 phosphate + 2 H(+). It participates in cofactor biosynthesis; adenosylcobalamin biosynthesis; cob(II)yrinate a,c-diamide from sirohydrochlorin (anaerobic route): step 10/10. Its function is as follows. Catalyzes the ATP-dependent amidation of the two carboxylate groups at positions a and c of cobyrinate, using either L-glutamine or ammonia as the nitrogen source. Involved in the biosynthesis of the unique nickel-containing tetrapyrrole coenzyme F430, the prosthetic group of methyl-coenzyme M reductase (MCR), which plays a key role in methanogenesis and anaerobic methane oxidation. Catalyzes the ATP-dependent amidation of the two carboxylate groups at positions a and c of Ni-sirohydrochlorin, using L-glutamine or ammonia as the nitrogen source. The chain is Cobyrinate a,c-diamide synthase from Methanocaldococcus jannaschii (strain ATCC 43067 / DSM 2661 / JAL-1 / JCM 10045 / NBRC 100440) (Methanococcus jannaschii).